Reading from the N-terminus, the 135-residue chain is uncharacterized protein (135 aa).

Residues 2–71 form the HTH merR-type domain; that stretch reads TYTTAKAAEK…LKDIKRFAEC (70 aa). The H-T-H motif DNA-binding region spans 5 to 24; the sequence is TAKAAEKIGISAYTLRFYDK.

This is an uncharacterized protein from Haemophilus influenzae (strain ATCC 51907 / DSM 11121 / KW20 / Rd).